The sequence spans 366 residues: Beta sliding clamp (366 aa).

The protein belongs to the beta sliding clamp family. Forms a ring-shaped head-to-tail homodimer around DNA which binds and tethers DNA polymerases and other proteins to the DNA. The DNA replisome complex has a single clamp-loading complex (3 tau and 1 each of delta, delta', psi and chi subunits) which binds 3 Pol III cores (1 core on the leading strand and 2 on the lagging strand) each with a beta sliding clamp dimer. Additional proteins in the replisome are other copies of gamma, psi and chi, Ssb, DNA helicase and RNA primase.

It localises to the cytoplasm. Confers DNA tethering and processivity to DNA polymerases and other proteins. Acts as a clamp, forming a ring around DNA (a reaction catalyzed by the clamp-loading complex) which diffuses in an ATP-independent manner freely and bidirectionally along dsDNA. Initially characterized for its ability to contact the catalytic subunit of DNA polymerase III (Pol III), a complex, multichain enzyme responsible for most of the replicative synthesis in bacteria; Pol III exhibits 3'-5' exonuclease proofreading activity. The beta chain is required for initiation of replication as well as for processivity of DNA replication. This Salmonella typhimurium (strain LT2 / SGSC1412 / ATCC 700720) protein is Beta sliding clamp (dnaN).